Reading from the N-terminus, the 400-residue chain is Acyl-CoA dehydrogenase FadE26 (400 aa).

FAD is bound by residues 127–130 (IGYS), Thr136, and Ser162. Glu247 acts as the Proton acceptor in catalysis. Residue 380–382 (TNE) participates in FAD binding.

This sequence belongs to the acyl-CoA dehydrogenase family. As to quaternary structure, heterotetramer (dimer of heterodimers) composed of FadE26 and FadE27. FAD is required as a cofactor.

It carries out the reaction (25S)-3-oxocholest-4-en-26-oyl-CoA + A = 3-oxo-cholest-4,24-dien-26-oyl-CoA + AH2. It functions in the pathway steroid metabolism; cholesterol degradation. Uncompetitively inhibited by high concentration of 3-OCS-CoA. Functionally, involved in the first cycle of side chain dehydrogenation in the beta-oxidation of cholesterol catabolism. It contributes partly to the virulence by increasing the efficiency of beta-oxidation. Catalyzes the dehydrogenation of acyl-CoA ester side chains of (25S)-3-oxo-cholest-4-en-26-oyl-CoA (3-OCS-CoA) to yield (24E)-3-oxo-cholest-4,24-dien-26-oyl-CoA. Also able to dehydrogenate steroyl-CoA such as 3-oxo-chol-4-en-24-oyl-CoA (3-OCO-CoA) as well as 3-oxo-4-pregnene-20-carboxyl-CoA (3-OPC-CoA). It dehydrogenates only (25S)-OCS-CoA diastereomer. This Mycobacterium tuberculosis (strain ATCC 25618 / H37Rv) protein is Acyl-CoA dehydrogenase FadE26 (fadE26).